The sequence spans 1123 residues: Ubiquitin carboxyl-terminal hydrolase 36 (1123 aa).

Basic and acidic residues-rich tracts occupy residues 1–19 (MPIVDKLKEALKPGRKDSA) and 69–90 (GASRHKSGDDPPARRQGSEHTY). Disordered regions lie at residues 1-22 (MPIVDKLKEALKPGRKDSADDG) and 67-95 (TEGASRHKSGDDPPARRQGSEHTYESCGD). The USP domain occupies 122–423 (AGLHNLGNTC…QAYVLFYLRI (302 aa)). C131 serves as the catalytic Nucleophile. H382 acts as the Proton acceptor in catalysis. Residues S429 and S464 each carry the phosphoserine modification. The segment at 430 to 577 (PEGLISRTGS…RQGSWDSRDV (148 aa)) is disordered. The segment covering 491–503 (RNGSTLGLKSQNG) has biased composition (polar residues). Low complexity predominate over residues 510-519 (PSGSPSPKLS). S546 is modified (phosphoserine). Over residues 557-571 (SNSNSSRSGSQRQGS) the composition is skewed to low complexity. Phosphoserine is present on S582. The disordered stretch occupies residues 589–999 (ATANGHGLKG…ESSSCAPSAN (411 aa)). Positions 597–609 (KGNDESAGLDRRG) are enriched in basic and acidic residues. The span at 610 to 623 (SSSSSPEHSASSDS) shows a compositional bias: low complexity. Positions 640 to 654 (SQETNCSTAGHSKTP) are enriched in polar residues. S667 is subject to Phosphoserine. Over residues 669-681 (VLSNTTTEPASTM) the composition is skewed to polar residues. Phosphoserine is present on S682. Positions 687 to 697 (KKLALSAKKAS) are enriched in low complexity. Phosphoserine occurs at positions 713 and 742. A compositionally biased stretch (polar residues) spans 773–785 (EPRSCSSISTALP). The span at 841–850 (HGKRKRKKKK) shows a compositional bias: basic residues. The segment covering 891 to 902 (GTQPQVNGQQVG) has biased composition (polar residues). The residue at position 952 (S952) is a Phosphoserine. The span at 963–975 (QETQRAVEEDGHL) shows a compositional bias: basic and acidic residues.

This sequence belongs to the peptidase C19 family. In terms of assembly, interacts with isoform 3 of FBXW7; the interaction inhibits MYC degradation induced by SCF(FBW7) complex. Interacts with NTRK1; USP36 does not deubiquitinate NTRK1. Interacts with NEDD4L (via domains WW1, 3 and 4); the interaction inhibits ubiquitination of, at least, NTRK1, KCNQ2 and KCNQ3 by NEDD4L. Interacts (via C-terminus) with EXOSC10 (via C-terminus); the interaction is facilitated by the association with RNA and promotes sumoylation of EXOSC10. Polyubiquitinated by NEDD4L, no effect on USP36 protein levels. Both proteins interact with and regulate each other's ubiquitination levels. Broadly expressed.

The protein localises to the nucleus. It localises to the nucleolus. It is found in the cytoplasm. It catalyses the reaction Thiol-dependent hydrolysis of ester, thioester, amide, peptide and isopeptide bonds formed by the C-terminal Gly of ubiquitin (a 76-residue protein attached to proteins as an intracellular targeting signal).. Functionally, deubiquitinase essential for the regulation of nucleolar structure and function. Required for cell and organism viability. Plays an important role in ribosomal RNA processing and protein synthesis, which is mediated, at least in part, through deubiquitination of DHX33, NPM1 and FBL, regulating their protein stability. Functions as a transcriptional repressor by deubiquiting histone H2B at the promoters of genes critical for cellular differentiation, such as CDKN1A, thereby preventing histone H3 'Lys-4' trimethylation (H3K4). Specifically deubiquitinates MYC in the nucleolus, leading to prevent MYC degradation by the proteasome: acts by specifically interacting with isoform 3 of FBXW7 (FBW7gamma) in the nucleolus and counteracting ubiquitination of MYC by the SCF(FBW7) complex. In contrast, it does not interact with isoform 1 of FBXW7 (FBW7alpha) in the nucleoplasm. Interacts to and regulates the actions of E3 ubiquitin-protein ligase NEDD4L over substrates such as NTRK1, KCNQ2 and KCNQ3, affecting their expression an functions. Deubiquitinates SOD2, regulates SOD2 protein stability. Deubiquitinase activity is required to control selective autophagy activation by ubiquitinated proteins. Promotes CEP63 stabilization through 'Lys-48'-linked deubiquitination leading to increased stability. Acts as a SUMO ligase to promote EXOSC10 sumoylation critical for the nucleolar RNA exosome function in rRNA processing. Binds to pre-rRNAs. In Homo sapiens (Human), this protein is Ubiquitin carboxyl-terminal hydrolase 36.